The chain runs to 144 residues: Small ribosomal subunit protein bS6 (144 aa).

The disordered stretch occupies residues 97 to 144 (DTEQSLIMKSKDEKGDKPERSERRRRDDEEVDAAPAATDTDGDNAEAA). Positions 105 to 124 (KSKDEKGDKPERSERRRRDD) are enriched in basic and acidic residues.

This sequence belongs to the bacterial ribosomal protein bS6 family.

Binds together with bS18 to 16S ribosomal RNA. In Xanthomonas campestris pv. campestris (strain B100), this protein is Small ribosomal subunit protein bS6.